Consider the following 183-residue polypeptide: Photosystem I assembly protein Ycf4 (183 aa).

Transmembrane regions (helical) follow at residues 23-43 and 64-84; these read WASV…SSYF and VMSF…LTII.

Belongs to the Ycf4 family.

It is found in the plastid. It localises to the chloroplast thylakoid membrane. Seems to be required for the assembly of the photosystem I complex. The polypeptide is Photosystem I assembly protein Ycf4 (Stigeoclonium helveticum (Green alga)).